Here is a 311-residue protein sequence, read N- to C-terminus: Glutaminase (311 aa).

Substrate-binding residues include Ser-69, Asn-120, Glu-164, Asn-171, Tyr-195, Tyr-247, and Val-265.

This sequence belongs to the glutaminase family. As to quaternary structure, homotetramer.

The catalysed reaction is L-glutamine + H2O = L-glutamate + NH4(+). This is Glutaminase from Colwellia psychrerythraea (strain 34H / ATCC BAA-681) (Vibrio psychroerythus).